We begin with the raw amino-acid sequence, 494 residues long: UPF0371 protein SPJ_0333 (494 aa).

This sequence belongs to the UPF0371 family.

The polypeptide is UPF0371 protein SPJ_0333 (Streptococcus pneumoniae (strain JJA)).